The sequence spans 37 residues: U10-ctenitoxin-Co1a (37 aa).

Disulfide bonds link cysteine 2-cysteine 17, cysteine 9-cysteine 22, cysteine 16-cysteine 33, and cysteine 24-cysteine 31.

Expressed by the venom gland.

Its subcellular location is the secreted. In terms of biological role, antagonist of L-type calcium channels (Cav1/CACNA1). The polypeptide is U10-ctenitoxin-Co1a (Ctenus ornatus (Brazilian spider)).